We begin with the raw amino-acid sequence, 842 residues long: Alanine--tRNA ligase (842 aa).

Zn(2+) is bound by residues His-549, His-553, Cys-650, and His-654.

It belongs to the class-II aminoacyl-tRNA synthetase family. The cofactor is Zn(2+).

The protein localises to the cytoplasm. The catalysed reaction is tRNA(Ala) + L-alanine + ATP = L-alanyl-tRNA(Ala) + AMP + diphosphate. In terms of biological role, catalyzes the attachment of alanine to tRNA(Ala) in a two-step reaction: alanine is first activated by ATP to form Ala-AMP and then transferred to the acceptor end of tRNA(Ala). Also edits incorrectly charged Ser-tRNA(Ala) and Gly-tRNA(Ala) via its editing domain. This chain is Alanine--tRNA ligase, found in Campylobacter jejuni subsp. doylei (strain ATCC BAA-1458 / RM4099 / 269.97).